A 493-amino-acid chain; its full sequence is Probable NADPH:adrenodoxin oxidoreductase, mitochondrial (493 aa).

FAD contacts are provided by Ser-26, Glu-48, Leu-56, and Ile-100. NADP(+) is bound by residues Asn-177 to Val-180, Arg-223 to Arg-224, and Glu-235. FAD is bound by residues Trp-407 and Gly-414–Ile-416. Gly-414 lines the NADP(+) pocket.

The protein belongs to the ferredoxin--NADP reductase type 1 family. FAD is required as a cofactor.

It localises to the mitochondrion inner membrane. It catalyses the reaction 2 reduced [adrenodoxin] + NADP(+) + H(+) = 2 oxidized [adrenodoxin] + NADPH. Its function is as follows. Adrenodoxin reductase transfers electrons from NADPH to adrenodoxin, which is involved in heme A biosynthesis and in iron-sulfur cluster assembly. Involved in the electron transfer to heme A synthase COX15, a heme protein that catalyzes the conversion of heme O to heme A. Required for the de novo synthesis of Fe-S clusters on iron sulfur cluster assembly protein ISU1. Involved in electron delivery for Fe-S cluster synthesis. Essential for coenzyme Q biosynthesis. May be involved in the electron transfer required for the hydroxylation reaction performed by COQ6. May play a role in cellular and mitochondrial iron homeostasis. This chain is Probable NADPH:adrenodoxin oxidoreductase, mitochondrial, found in Saccharomyces cerevisiae (strain ATCC 204508 / S288c) (Baker's yeast).